Consider the following 3015-residue polypeptide: MSTLPKPQRKTKRNTNRRPMDVKFPGGGQIVGGVYLLPRRGPRLGVRATRKTSERSQPRGRRQPIPKARQPIGRSWGQPGYPWPLYGNEGCGWAGWLLSPRGSRPNWGPNDPRRRSRNLGKVIDTLTCGLADLMGYIPVLGGPLGGVAAALAHGVRAIEDGVNYATGNLPGCSFSIFLLALLSCLTTPASAIQVRNASGIYHLTNDCSNNSIVFEAETIILHLPGCVPCIKVGNGSRCWLSVSPTLAVPNSSVPIHGFRRHVDLLVGAAAFCSAMYIGDLCGSVFLVGQLFTFRPKHHQVTQDCNCSIYAGHITGHRMAWDMMLNWSPTVSYVVSSALRVPQLLLEVITGAHWGVLGALLYFSMVANWAKVIAVLFLFAGADATTYTGSAVSSTTGAFVSLFSPGPTQNLQLVNSNGSWHINRTALNCNDSLQTGFIAGLFARYKFNSTGCPERMSKCRPLHSFEQGWGPISYVNISGSSEDKPYCWHYAPRPCGIVPARNVCGPVYCFTPSPVVVGTTDQRGIPTYTWGENVSDVFLLHSARPPLGAWFGCTWMNSSGFVKTCGAPPCRIKPTINETDLVCPTDCFRKHPDASFVKCGSGPWLTPRCMVDYPYRLWHYPCTVNFTIHKVRVFVGGVEHRFNAACNWTRGDRCELDDRDRFEMSPLLFSTTQLAILPCSFTTMPALSTGLIHLHQNIVDIQYLYGVSTAVVSWAMKWEYVVLAFLVLADARVCACLWLMFLVGQAEAALENVIVLNAASAASCQGLLWGLIFICCAWHVRGRAVPVTTYALLQLWPLLLLILALPRRAYAFDSEQAASAGLLVLGLITIFTLTPAYKQLLISMLWWIQYFIALTEAQLHQWVPSLLVRGGRDAVILLACLFHPQLGFEVTKILLALLGPLYLLQYSLLKTPYFVRAHILLRACMFFRGMARGRYAQAILLRIGAWTGTYIYDHLAPLSDWACDGLRDLAVAVEPVVFSPMEKKVITWGADTAACGDIIAGLPVAARRGNLLFLGPADDVKGKGWRLLAPITAYAQQTRGIVGTIVTSLTGRDKNEVEGEIQVVSTATQSFLATAVNGVLWTVYYGAGSKTLAGPKGPVCQMYTNVDQDLVGWPAPAGARSLTPCSCGSSDLYLVTRNADVIPARRRGDNRAALLSPRPISTLKGSSGGPMLCPSGHVAGIFRAAVCTRGVAKSLDFAPVESMQSSQRSPSFSDNTSPPAVPQTYQVGYLHAPTGSGKSTKVPAAYAAQGYKVLVLNPSVAATLGFGSYMSTSHGIDPNIRTGVRTITTGGAITYSTYGKFLADGGCSGGAYDVIICDECHSTDPTTVSGIGTVLDQAETSGVRLTVLATATPPGSVTVPHPNITESALPTTGEIPFYGKAVPLEYIKGGRHLIFCHPKKKCDELAKQLVSLGLNAVAFYRGVDVSVIPTSGDVVVCATDALMTGYTGDFDSVIDCNVTVTQVVDFSLDPTFTIETTTVPQDAVSRSQRRGRTGRGKHGVYRYVSQGERPSGMFDSVILCEAYDTGCAWYELTPAETTVRLRAYLNTPGLPVCQDHLEFWEGVFTGLTHIDAHFLSQTKQAEENFAYLVAYQATVCARAKAPPPSWDTMWKCLIRLKPMLTGPTPLLYRLGPVQNEVVTTHPITKYIMTCMSADLEVITSTWVLVGGVVAALAAYCLSVGCVVICGRISTSGKPVLIPDREVLYQQFDEMEECSRHIPYLAEGHLIAEQFKQKVLGLIQSTSKQAEELKPAVHAAWPKLEQFWQKQLWNFVSGIQYLAGLSTLPGNPAIASLMSFSASLTSPLSTHQTLLLNILGGWVASQLANPTASTAFVVSGLAGAAVGSIGLGRVIVDVLAGYGAGVSGALVAFKIMCGETPSAEDMVNLLPALLSPGALVVGVVCAAILRRHAGPSEGATQWMNRLIAFASRGNHVSPTHYVPETDTSRQIMTILSSLTVTSLLRKLHEWINTDWSTPCSSSWLRDIWDWVCEVLSDFKTWLKAKLVPALPGVPFLSCQRGFRGTWRGDGICHTTCPCGSEITGHVKNGTMKISGPRWCSNVSHRTFPINATTTGPSVPIPEPNYTRALWRVSAEEYVEVKRVGDSHFVVGATTDNLKCPCQVPAPEFFTEVDGVRLHRYAPRCKPLLRDEVSFSVGLSSYAVGSQLPCEPEPDVTVVTSMLIDPSHVTAEAAARRLARGSPPSLASSSASQLSAPSLKATCTMHGAHPDAELIEANLLWRQEMGGNITRVESENKVVILDSFDPLVPEFEEREMSVPAECHRPRRPKFPPALPIWATPGYNPPVLETWKSPTYEPPVVHGCALPPSGPPPIPPPRRKKVVQLDSSNVSAALAQLAAKTFETPSSPTTGYGSDQPDHSTESSEHDRDDGVASEAESYSSMPPLEGEPGDPDLSSGSWSTVSEEGDSVVCCSYSYSWTGALVTPCAAEEEKLPINPLSNSLIRHHNLVYSTSSRSAATRQKKVTFDRVQLLDQHYYDTVKEIKLRASHVKAQLLSTEEACDLTPPHSARSKFGYGAKDVRSHASKAINHINSVWADLLEDTQTPIPTTIMAKNEVFCVDASKGGRKSARLIVYPDLGVRVCEKRALFDVTRKLPTAIMGDAYGFQYSPQQRVDRLLKMWRSKKTPMGFSYDTRCFDSTVTERDIRTEQDIYLSCQLDPEARKVIESLTERLYVGGPMYNSKGQLCGQRRCRASGVLPTSMGNTVTCFLKATAACRAAGFTDYDMLVCGDDLVVVTESAGVNEDIANLRAFTEAMTRYSATPGDEPSPTYDLELITSCSSNVSVAHDGDGRRYYYLTRDPVTPLARAAWETARHTPVNSWLGNIIMYAPTIWVRMVLMTHFFQILQAQETLDRALDFDIYGVTYSITPLDLPVIIQRLHGMAAFSLHGYSPDELNRVASCLRKLGAPPLRAWRHRARAVRAKLIAQGGKAAVCGKYLFNWAIKTKLRLTPLRGASALDLSGWFTSGYGGGDVYHSASRARPRFLLLCLLLLSVGVGIFLLPAR.

An N-acetylserine; by host modification is found at serine 2. The tract at residues serine 2–lysine 23 is interaction with STAT1. The interaction with EIF2AK2/PKR stretch occupies residues serine 2–proline 58. Residues serine 2–arginine 59 are interaction with DDX3X. The interval serine 2–serine 75 is disordered. Residues serine 2–asparagine 168 are Cytoplasmic-facing. 2 consecutive short sequence motifs (nuclear localization signal) follow at residues proline 5–arginine 13 and proline 38–arginine 43. Residues proline 7–asparagine 16 are compositionally biased toward basic residues. Residues glycine 32 to arginine 47 are compositionally biased toward low complexity. Phosphoserine; by host is present on serine 53. 2 short sequence motifs (nuclear localization signal) span residues proline 58 to proline 64 and proline 66 to proline 71. Serine 99 and serine 116 each carry phosphoserine; by host. The segment at proline 112–alanine 152 is important for endoplasmic reticulum and mitochondrial localization. The interval valine 122–serine 173 is interaction with APOA2. Positions tyrosine 164–glycine 167 are important for lipid droplets localization. A helical membrane pass occupies residues leucine 169–alanine 189. A propeptide spans leucine 178 to alanine 191 (ER anchor for the core protein, removed in mature form by host signal peptidase). The Lumenal portion of the chain corresponds to serine 190–alanine 358. Residues asparagine 196, asparagine 209, asparagine 234, and asparagine 250 are each glycosylated (N-linked (GlcNAc...) asparagine; by host). The tract at residues leucine 265–lysine 296 is important for fusion. An N-linked (GlcNAc...) asparagine; by host glycan is attached at asparagine 305. Residues leucine 359 to alanine 379 traverse the membrane as a helical segment. The Lumenal segment spans residues glycine 380–valine 726. The segment at threonine 385 to glutamine 411 is HVR1. Asparagine 416, asparagine 422, and asparagine 429 each carry an N-linked (GlcNAc...) (high mannose) asparagine; by host glycan. 4 disulfides stabilise this stretch: cysteine 428–cysteine 552, cysteine 451–cysteine 458, cysteine 486–cysteine 494, and cysteine 503–cysteine 508. The N-linked (GlcNAc...) asparagine; by host glycan is linked to asparagine 447. The HVR2 stretch occupies residues valine 474–glycine 478. N-linked (GlcNAc...) asparagine; by host glycosylation occurs at asparagine 475. Residues serine 480 to proline 493 are CD81-binding 1. The N-linked (GlcNAc...) asparagine; by host glycan is linked to asparagine 532. Residues proline 544–glycine 551 form a CD81-binding 2 region. Residue asparagine 556 is glycosylated (N-linked (GlcNAc...) asparagine; by host). 4 cysteine pairs are disulfide-bonded: cysteine 564–cysteine 569, cysteine 582–cysteine 586, cysteine 598–cysteine 621, and cysteine 608–cysteine 645. 2 N-linked (GlcNAc...) (high mannose) asparagine; by host glycosylation sites follow: asparagine 624 and asparagine 646. Cysteines 653 and 678 form a disulfide. The segment at phenylalanine 661–glutamine 672 is PKR/eIF2-alpha phosphorylation homology domain (PePHD). A helical transmembrane segment spans residues leucine 727–alanine 747. Residues alanine 748–alanine 758 are Lumenal-facing. A helical transmembrane segment spans residues serine 759–valine 779. Topologically, residues arginine 780–alanine 783 are cytoplasmic. The chain crosses the membrane as a helical span at residues valine 784 to leucine 804. The Lumenal segment spans residues proline 805–glutamate 814. The helical transmembrane segment at glutamine 815–alanine 835 threads the bilayer. Over tyrosine 836–histidine 882 the chain is Cytoplasmic. A helical membrane pass occupies residues proline 883–leucine 903. At glutamine 904–methionine 929 the chain is on the lumenal side. The 124-residue stretch at glutamine 904–leucine 1027 folds into the Peptidase C18 domain. The tract at residues tyrosine 905–arginine 1207 is protease NS2-3. Cysteine 923 carries S-palmitoyl cysteine; by host lipidation. A helical membrane pass occupies residues alanine 930 to isoleucine 950. Residues alanine 930–isoleucine 950 form an interaction with host SCPS1 region. The Cytoplasmic portion of the chain corresponds to tyrosine 951–threonine 1658. Active-site for protease NS2 activity; shared with dimeric partner residues include histidine 953, glutamate 973, and cysteine 994. The region spanning alanine 1028 to proline 1209 is the Peptidase S29 domain. Aspartate 1108 serves as the catalytic Charge relay system; for serine protease NS3 activity. The Zn(2+) site is built by cysteine 1124 and cysteine 1126. The active-site Charge relay system; for serine protease NS3 activity is the serine 1166. Zn(2+) is bound by residues cysteine 1172 and histidine 1176. The region spanning proline 1218–threonine 1370 is the Helicase ATP-binding domain. Residue alanine 1231–serine 1238 participates in ATP binding. Mg(2+) is bound by residues serine 1238 and glutamate 1318. The DECH box signature appears at aspartate 1317–histidine 1320. The interval glutamine 1487–valine 1499 is RNA-binding. A helical transmembrane segment spans residues serine 1659–glycine 1679. Residues cysteine 1680–glycine 1691 are NS3-binding. Residues cysteine 1680–glutamine 1806 lie on the Cytoplasmic side of the membrane. A helical membrane pass occupies residues threonine 1807–serine 1827. The Lumenal portion of the chain corresponds to threonine 1828–alanine 1829. A helical transmembrane segment spans residues phenylalanine 1830–valine 1850. Aspartate 1851 is a topological domain (cytoplasmic). Residues valine 1852–glycine 1872 traverse the membrane as a helical segment. Over glutamate 1873 to asparagine 1882 the chain is Lumenal. The chain crosses the membrane as a helical span at residues leucine 1883–leucine 1903. Residues arginine 1904–cysteine 1973 lie on the Cytoplasmic side of the membrane. Cysteine 1973 carries the S-palmitoyl cysteine; by host lipid modification. The stretch at serine 1974–alanine 2003 is an intramembrane region. Residues leucine 2004–arginine 2994 lie on the Cytoplasmic side of the membrane. The Zn(2+) site is built by cysteine 2012, cysteine 2030, cysteine 2032, and cysteine 2053. Positions glutamate 2121 to alanine 2209 are FKBP8-binding. The segment at glutamate 2121 to valine 2334 is transcriptional activation. The interaction with non-structural protein 4A stretch occupies residues proline 2136–proline 2140. An interaction with host SKP2 region spans residues arginine 2190–glutamate 2442. Residues serine 2195, serine 2198, serine 2202, serine 2205, serine 2208, and serine 2211 each carry the phosphoserine; by host modification. Positions serine 2211–lysine 2250 are ISDR. The tract at residues serine 2211 to histidine 2276 is interaction with EIF2AK2/PKR. The NS4B-binding stretch occupies residues lysine 2250–tyrosine 2308. A V3 region spans residues glutamate 2301 to histidine 2378. 2 disordered regions span residues proline 2319–aspartate 2338 and lysine 2352–threonine 2413. The SH3-binding signature appears at proline 2324–proline 2327. The short motif at proline 2329–leucine 2337 is the Nuclear localization signal element. A Glycyl lysine isopeptide (Lys-Gly) (interchain with G-Cter in ubiquitin) cross-link involves residue lysine 2352. Positions glutamate 2355 to glycine 2365 are enriched in polar residues. Positions glutamine 2368 to glycine 2383 are enriched in basic and acidic residues. Phosphoserine; by host occurs at positions 2453 and 2466. The RdRp catalytic domain maps to proline 2638–aspartate 2756. The Mg(2+) site is built by aspartate 2644, aspartate 2742, and aspartate 2743. Residues phenylalanine 2995 to arginine 3015 traverse the membrane as a helical segment.

Belongs to the hepacivirus polyprotein family. Homooligomer. Interacts with E1 (via C-terminus). Interacts with the non-structural protein 5A. Interacts (via N-terminus) with host STAT1 (via SH2 domain); this interaction results in decreased STAT1 phosphorylation and ubiquitin-mediated proteasome-dependent STAT1 degradation, leading to decreased IFN-stimulated gene transcription. Interacts with host STAT3; this interaction constitutively activates STAT3. Interacts with host LTBR receptor. Interacts with host TNFRSF1A receptor and possibly induces apoptosis. Interacts with host HNRPK. Interacts with host YWHAE. Interacts with host UBE3A/E6AP. Interacts with host DDX3X. Interacts with host APOA2. Interacts with host RXRA protein. Interacts with host SP110 isoform 3/Sp110b; this interaction sequesters the transcriptional corepressor SP110 away from the nucleus. Interacts with host CREB3 nuclear transcription protein; this interaction triggers cell transformation. Interacts with host ACY3. Interacts with host C1QR1. Interacts with host RBM24; this interaction, which enhances the interaction of the mature core protein with 5'-UTR, may inhibit viral translation and favor replication. Interacts with host EIF2AK2/PKR; this interaction induces the autophosphorylation of EIF2AK2. Part of the viral assembly initiation complex composed of NS2, E1, E2, NS3, NS4A, NS5A and the mature core protein. In terms of assembly, forms a heterodimer with envelope glycoprotein E2. Interacts with mature core protein. Interacts with protease NS2. The heterodimer E1/E2 interacts with host CLDN1; this interaction plays a role in viral entry into host cell. Interacts with host SPSB2 (via C-terminus). Part of the viral assembly initiation complex composed of NS2, E1, E2, NS3, NS4A, NS5A and the mature core protein. Interacts with host NEURL3; this interaction prevents E1 binding to glycoprotein E2. As to quaternary structure, forms a heterodimer with envelope glycoprotein E1. Interacts with host CD81 and SCARB1 receptors; these interactions play a role in viral entry into host cell. Interacts with host EIF2AK2/PKR; this interaction inhibits EIF2AK2 and probably allows the virus to evade the innate immune response. Interacts with host CD209/DC-SIGN and CLEC4M/DC-SIGNR. Interact with host SPCS1; this interaction is essential for viral particle assembly. Interacts with protease NS2. The heterodimer E1/E2 interacts with host CLDN1; this interaction plays a role in viral entry into host cell. Part of the viral assembly initiation complex composed of NS2, E1, E2, NS3, NS4A, NS5A and the mature core protein. Interacts with host SLC3A2/4F2hc; the interaction may facilitate viral entry into host cell. Interacts with human PLSCR1. Homohexamer. Homoheptamer. Interacts with protease NS2. In terms of assembly, homodimer. Interacts with host SPCS1; this interaction is essential for viral particle assembly. Interacts with envelope glycoprotein E1. Interacts with envelope glycoprotein E2. Interacts with viroporin p7. Interacts with serine protease/helicase NS3. Part of the replication complex composed of NS2, NS3, NS4A, NS4B, NS5A and the RNA-directed RNA polymerase embedded in an ER-derived membranous web. Part of the viral assembly initiation complex composed of NS2, E1, E2, NS3, NS4A, NS5A and the mature core protein. As to quaternary structure, interacts with protease NS2. Interacts with non-structural protein 4A; this interaction stabilizes the folding of NS3 serine protease. NS3-NS4A interaction is essential for NS3 activation and allows membrane anchorage of the latter. NS3/NS4A complex also prevents phosphorylation of host IRF3, thus preventing the establishment of dsRNA induced antiviral state. Interacts with host MAVS; this interaction leads to the cleavage and inhibition of host MAVS. Interacts with host TICAM1; this interaction leads to the cleavage and inhibition of host TICAM1. Interacts with host TANK-binding kinase/TBK1; this interaction results in the inhibition of the association between TBK1 and IRF3, which leads to the inhibition of IRF3 activation. Interacts with host RBM24. Part of the replication complex composed of NS2, NS3, NS4A, NS4B, NS5A and the RNA-directed RNA polymerase embedded in an ER-derived membranous web. Part of the viral assembly initiation complex composed of NS2, E1, E2, NS3, NS4A, NS5A and the mature core protein. Interacts with NS3 serine protease; this interaction stabilizes the folding of NS3 serine protease. NS3-NS4A interaction is essential for NS3 activation and allows membrane anchorage of the latter. Interacts with non-structural protein 5A (via N-terminus). Part of the replication complex composed of NS2, NS3, NS4A, NS4B, NS5A and the RNA-directed RNA polymerase embedded in an ER-derived membranous web. Part of the viral assembly initiation complex composed of NS2, E1, E2, NS3, NS4A, NS5A and the mature core protein. In terms of assembly, homomultimer. Interacts with non-structural protein NS5A. Interacts with host PLA2G4C; this interaction likely initiates the recruitment of replication complexes to lipid droplets. Interacts with host STING; this interaction disrupts the interaction between STING and TBK1 thereby suppressing the interferon signaling. Part of the replication complex composed of NS2, NS3, NS4A, NS4B, NS5A and the RNA-directed RNA polymerase embedded in an ER-derived membranous web. As to quaternary structure, monomer. Homodimer; dimerization is required for RNA-binding. Interacts with the mature core protein. Interacts (via N-terminus) with non-structural protein 4A. Interacts with non-structural protein 4B. Interacts (via region D2) with RNA-directed RNA polymerase. Part of the viral assembly initiation complex composed of NS2, E1, E2, NS3, NS4A, NS5A and the mature core protein. Part of the replication complex composed of NS2, NS3, NS4A, NS4B, NS5A and the RNA-directed RNA polymerase embedded in an ER-derived membranous web. Interacts with host GRB2. Interacts with host BIN1. Interacts with host PIK3R1. Interacts with host SRCAP. Interacts with host FKBP8. Interacts (via C-terminus) with host VAPB (via MSP domain). Interacts with host EIF2AK2/PKR; this interaction leads to disruption of EIF2AK2 dimerization by NS5A and probably allows the virus to evade the innate immune response. Interacts (via N-terminus) with host PACSIN2 (via N-terminus); this interaction attenuates protein kinase C alpha-mediated phosphorylation of PACSIN2 by disrupting the interaction between PACSIN2 and PRKCA. Interacts (via N-terminus) with host SRC kinase (via SH2 domain). Interacts with most Src-family kinases. Interacts with host IFI27 and SKP2; promotes the ubiquitin-mediated proteasomal degradation of NS5A. Interacts with host GPS2. Interacts with host TNFRSF21; this interaction allows the modulation by the virus of JNK, p38 MAPK, STAT3, and Akt signaling pathways in a DR6-dependent manner. Interacts (via N-terminus) with host CIDEB (via N-terminus); this interaction seems to regulate the association of HCV particles with APOE. Interacts with host CHKA/Choline Kinase-alpha; CHKA bridges host PI4KA and NS5A and potentiates NS5A-stimulated PI4KA activity, which then facilitates the targeting of the ternary complex to the ER for viral replication. Interacts with host SPSB2 (via C-terminus); this interaction targets NS5A for ubiquitination and degradation. Interacts with host RAB18; this interaction may promote the association of NS5A and other replicase components with lipid droplets. Interacts (via region D2) with host PPIA/CYPA; the interaction stimulates RNA-binding ability of NS5A and is dependent on the peptidyl-prolyl cis-trans isomerase activity of PPIA/CYPA. Interacts with host TRIM14; this interaction induces the degradation of NS5A. Homooligomer. Interacts with non-structural protein 5A. Interacts with host VAPB. Interacts with host PRK2/PKN2. Interacts with host HNRNPA1 and SEPT6; these interactions facilitate viral replication. Part of the replication complex composed of NS2, NS3, NS4A, NS4B, NS5A and the RNA-directed RNA polymerase. Zn(2+) serves as cofactor. It depends on Mg(2+) as a cofactor. Post-translationally, specific enzymatic cleavages in vivo yield mature proteins. The structural proteins, core, E1, E2 and p7 are produced by proteolytic processing by host signal peptidases. The core protein precursor is synthesized as a 23 kDa, which is retained in the ER membrane through the hydrophobic signal peptide. Cleavage by the signal peptidase releases the 21 kDa mature core protein. The cleavage of the core protein precursor occurs between aminoacids 176 and 188 but the exact cleavage site is not known. Some degraded forms of the core protein appear as well during the course of infection. The other proteins (p7, NS2, NS3, NS4A, NS4B, NS5A and NS5B) are cleaved by the viral proteases. Autoprocessing between NS2 and NS3 is mediated by the NS2 cysteine protease catalytic domain and regulated by the NS3 N-terminal domain. Phosphorylated by host PKC and PKA. In terms of processing, ubiquitinated; mediated by UBE3A and leading to core protein subsequent proteasomal degradation. Post-translationally, highly N-glycosylated. Palmitoylation is required for NS2/3 autoprocessing and E2 recruitment to membranes. In terms of processing, palmitoylated. This modification may play a role in its polymerization or in protein-protein interactions. Post-translationally, phosphorylated on serines in a basal form termed p56. p58 is a hyperphosphorylated form of p56. p56 and p58 coexist in the cell in roughly equivalent amounts. Hyperphosphorylation is dependent on the presence of NS4A. Host CSNK1A1/CKI-alpha or RPS6KB1 kinases may be responsible for NS5A phosphorylation. Tyrosine phosphorylation is essential for the interaction with host SRC. In terms of processing, ubiquitinated. Ubiquitination, most probably at Lys-2352, mediated by host IFI27 and SKP2 leads to proteasomal degradation, restricting viral infection. Ubiquitination by host TRIM22 leads to interruption of viral replication. Post-translationally, the N-terminus is phosphorylated by host PRK2/PKN2.

It is found in the host endoplasmic reticulum membrane. The protein localises to the host mitochondrion membrane. Its subcellular location is the virion. It localises to the host cytoplasm. The protein resides in the host nucleus. It is found in the host lipid droplet. The protein localises to the virion membrane. Its subcellular location is the host mitochondrion. It localises to the host cell membrane. The protein resides in the host perinuclear region. The catalysed reaction is Hydrolysis of four peptide bonds in the viral precursor polyprotein, commonly with Asp or Glu in the P6 position, Cys or Thr in P1 and Ser or Ala in P1'.. It catalyses the reaction a ribonucleoside 5'-triphosphate + H2O = a ribonucleoside 5'-diphosphate + phosphate + H(+). The enzyme catalyses ATP + H2O = ADP + phosphate + H(+). It carries out the reaction RNA(n) + a ribonucleoside 5'-triphosphate = RNA(n+1) + diphosphate. Inhibited by the antiviral drug hexamethylene amiloride. Inhibition by amantadine appears to be genotype-dependent. Also inhibited by long-alkyl-chain iminosugar derivatives. With respect to regulation, activity is up-regulated by PRK2/PKN2-mediated phosphorylation. Its function is as follows. Packages viral RNA to form a viral nucleocapsid, and promotes virion budding. Participates in the viral particle production as a result of its interaction with the non-structural protein 5A. Binds RNA and may function as a RNA chaperone to induce the RNA structural rearrangements taking place during virus replication. Modulates viral translation initiation by interacting with viral IRES and 40S ribosomal subunit. Affects various cell signaling pathways, host immunity and lipid metabolism. Prevents the establishment of cellular antiviral state by blocking the interferon-alpha/beta (IFN-alpha/beta) and IFN-gamma signaling pathways and by blocking the formation of phosphorylated STAT1 and promoting ubiquitin-mediated proteasome-dependent degradation of STAT1. Activates STAT3 leading to cellular transformation. Regulates the activity of cellular genes, including c-myc and c-fos. May repress the promoter of p53, and sequester CREB3 and SP110 isoform 3/Sp110b in the cytoplasm. Represses cell cycle negative regulating factor CDKN1A, thereby interrupting an important check point of normal cell cycle regulation. Targets transcription factors involved in the regulation of inflammatory responses and in the immune response: suppresses TNF-induced NF-kappa-B activation, and activates AP-1. Binds to dendritic cells (DCs) via C1QR1, resulting in down-regulation of T-lymphocytes proliferation. Alters lipid metabolism by interacting with hepatocellular proteins involved in lipid accumulation and storage. Induces up-regulation of FAS promoter activity, and thereby contributes to the increased triglyceride accumulation in hepatocytes (steatosis). Functionally, forms a heterodimer with envelope glycoprotein E2, which mediates virus attachment to the host cell, virion internalization through clathrin-dependent endocytosis and fusion with host membrane. Fusion with the host cell is most likely mediated by both E1 and E2, through conformational rearrangements of the heterodimer required for fusion rather than a classical class II fusion mechanism. E1/E2 heterodimer binds host apolipoproteins such as APOB and ApoE thereby forming a lipo-viro-particle (LVP). APOE associated to the LVP allows the initial virus attachment to cell surface receptors such as the heparan sulfate proteoglycans (HSPGs), syndecan-1 (SDC1), syndecan-1 (SDC2), the low-density lipoprotein receptor (LDLR) and scavenger receptor class B type I (SCARB1). The cholesterol transfer activity of SCARB1 allows E2 exposure and binding of E2 to SCARB1 and the tetraspanin CD81. E1/E2 heterodimer binding on CD81 activates the epithelial growth factor receptor (EGFR) signaling pathway. Diffusion of the complex E1-E2-EGFR-SCARB1-CD81 to the cell lateral membrane allows further interaction with Claudin 1 (CLDN1) and occludin (OCLN) to finally trigger HCV entry. In terms of biological role, forms a heterodimer with envelope glycoprotein E1, which mediates virus attachment to the host cell, virion internalization through clathrin-dependent endocytosis and fusion with host membrane. Fusion with the host cell is most likely mediated by both E1 and E2, through conformational rearrangements of the heterodimer required for fusion rather than a classical class II fusion mechanism. The interaction between envelope glycoprotein E2 and host apolipoprotein E/APOE allows the proper assembly, maturation and infectivity of the viral particles. This interaction is probably promoted via the up-regulation of cellular autophagy by the virus. E1/E2 heterodimer binds host apolipoproteins such as APOB and APOE thereby forming a lipo-viro-particle (LVP). APOE associated to the LVP allows the initial virus attachment to cell surface receptors such as the heparan sulfate proteoglycans (HSPGs), syndecan-1 (SDC1), syndecan-1 (SDC2), the low-density lipoprotein receptor (LDLR) and scavenger receptor class B type I (SCARB1). The cholesterol transfer activity of SCARB1 allows E2 exposure and binding of E2 to SCARB1 and the tetraspanin CD81. E1/E2 heterodimer binding on CD81 activates the epithelial growth factor receptor (EGFR) signaling pathway. Diffusion of the complex E1-E2-EGFR-SCARB1-CD81 to the cell lateral membrane allows further interaction with Claudin 1 (CLDN1) and occludin (OCLN) to finally trigger HCV entry. Inhibits host EIF2AK2/PKR activation, preventing the establishment of an antiviral state. Viral ligand for CD209/DC-SIGN and CLEC4M/DC-SIGNR, which are respectively found on dendritic cells (DCs), and on liver sinusoidal endothelial cells and macrophage-like cells of lymph node sinuses. These interactions allow the capture of circulating HCV particles by these cells and subsequent facilitated transmission to permissive cells such as hepatocytes and lymphocyte subpopulations. The interaction between E2 and host amino acid transporter complex formed by SLC3A2 and SLC7A5/LAT1 may facilitate viral entry into host cell. Ion channel protein that acts as a viroporin and plays an essential role in the assembly, envelopment and secretion of viral particles. Regulates the host cell secretory pathway, which induces the intracellular retention of viral glycoproteins and favors assembly of viral particles. Creates a pore in acidic organelles and releases Ca(2+) and H(+) in the cytoplasm of infected cells, leading to a productive viral infection. High levels of cytoplasmic Ca(2+) may trigger membrane trafficking and transport of viral ER-associated proteins to viroplasms, sites of viral genome replication. This ionic imbalance induces the assembly of the inflammasome complex, which triggers the maturation of pro-IL-1beta into IL-1beta through the action of caspase-1. Targets also host mitochondria and induces mitochondrial depolarization. In addition of its role as a viroporin, acts as a lipid raft adhesion factor. Its function is as follows. Cysteine protease required for the proteolytic auto-cleavage between the non-structural proteins NS2 and NS3. The N-terminus of NS3 is required for the function of NS2 protease (active region NS2-3). Promotes the initiation of viral particle assembly by mediating the interaction between structural and non-structural proteins. Functionally, displays three enzymatic activities: serine protease with a chymotrypsin-like fold, NTPase and RNA helicase. NS3 serine protease, in association with NS4A, is responsible for the cleavages of NS3-NS4A, NS4A-NS4B, NS4B-NS5A and NS5A-NS5B. The NS3/NS4A complex prevents phosphorylation of host IRF3, thus preventing the establishment of dsRNA induced antiviral state. The NS3/NS4A complex induces host amino acid transporter component SLC3A2, thus contributing to HCV propagation. NS3 RNA helicase binds to RNA and unwinds both dsDNA and dsRNA in the 3' to 5' direction, and likely resolves RNA complicated stable secondary structures in the template strand. Binds a single ATP and catalyzes the unzipping of a single base pair of dsRNA. Inhibits host antiviral proteins TBK1 and IRF3 thereby preventing the establishment of an antiviral state. Cleaves host MAVS/CARDIF thereby preventing the establishment of an antiviral state. Cleaves host TICAM1/TRIF, thereby disrupting TLR3 signaling and preventing the establishment of an antiviral state. In terms of biological role, peptide cofactor which forms a non-covalent complex with the N-terminal of NS3 serine protease. The NS3/NS4A complex prevents phosphorylation of host IRF3, thus preventing the establishment of dsRNA induced antiviral state. The NS3/NS4A complex induces host amino acid transporter component SLC3A2, thus contributing to HCV propagation. Induces a specific membrane alteration that serves as a scaffold for the virus replication complex. This membrane alteration gives rise to the so-called ER-derived membranous web that contains the replication complex. NS4B self-interaction contributes to its function in membranous web formation. Promotes host TRIF protein degradation in a CASP8-dependent manner thereby inhibiting host TLR3-mediated interferon signaling. Disrupts the interaction between STING and TBK1 contributing to the inhibition of interferon signaling. Its function is as follows. Phosphorylated protein that is indispensable for viral replication and assembly. Both hypo- and hyperphosphorylated states are required for the viral life cycle. The hyperphosphorylated form of NS5A is an inhibitor of viral replication. Involved in RNA-binding and especially in binding to the viral genome. Zinc is essential for RNA-binding. Participates in the viral particle production as a result of its interaction with the mature viral core protein. Its interaction with host VAPB may target the viral replication complex to vesicles. Down-regulates viral IRES translation initiation. Mediates interferon resistance, presumably by interacting with and inhibiting host EIF2AK2/PKR. Prevents BIN1-induced apoptosis. Acts as a transcriptional activator of some host genes important for viral replication when localized in the nucleus. Via the interaction with host PACSIN2, modulates lipid droplet formation in order to promote virion assembly. Modulates TNFRSF21/DR6 signaling pathway for viral propagation. Functionally, RNA-dependent RNA polymerase that performs primer-template recognition and RNA synthesis during viral replication. Initiates RNA transcription/replication at a flavin adenine dinucleotide (FAD), resulting in a 5'- FAD cap on viral RNAs. In this way, recognition of viral 5' RNA by host pattern recognition receptors can be bypassed, thereby evading activation of antiviral pathways. The sequence is that of Genome polyprotein from Hepatitis C virus genotype 6h (isolate VN004) (HCV).